The following is a 359-amino-acid chain: tRNA N6-adenosine threonylcarbamoyltransferase (359 aa).

Fe cation-binding residues include His-115 and His-119. Residues 137 to 141, Asp-170, Gly-183, and Asn-283 contribute to the substrate site; that span reads LVSGG. Fe cation is bound at residue Asp-311. The disordered stretch occupies residues 328-359; the sequence is APDSLDIAPRSRWPLDEKSAPVFGTGRRGAKA.

This sequence belongs to the KAE1 / TsaD family. It depends on Fe(2+) as a cofactor.

It localises to the cytoplasm. The enzyme catalyses L-threonylcarbamoyladenylate + adenosine(37) in tRNA = N(6)-L-threonylcarbamoyladenosine(37) in tRNA + AMP + H(+). Required for the formation of a threonylcarbamoyl group on adenosine at position 37 (t(6)A37) in tRNAs that read codons beginning with adenine. Is involved in the transfer of the threonylcarbamoyl moiety of threonylcarbamoyl-AMP (TC-AMP) to the N6 group of A37, together with TsaE and TsaB. TsaD likely plays a direct catalytic role in this reaction. This chain is tRNA N6-adenosine threonylcarbamoyltransferase, found in Brucella ovis (strain ATCC 25840 / 63/290 / NCTC 10512).